The primary structure comprises 137 residues: MSGGFLDKVLNFMGFSEEEEEEYVEKEPAKKVRGKANLVALPGMSMLKMMVFEPRSFDEVQGIADSLKSGSPVVVNLERIDGELGRRIIDFLMGTTYALGGHLHKINPQIYLFAPQNVLIEGEMREFRDKTFFNPFK.

Belongs to the SepF family. In terms of assembly, homodimer. Interacts with FtsZ.

Its subcellular location is the cytoplasm. Its function is as follows. Cell division protein that is part of the divisome complex and is recruited early to the Z-ring. Probably stimulates Z-ring formation, perhaps through the cross-linking of FtsZ protofilaments. Its function overlaps with FtsA. This is Cell division protein SepF from Carboxydothermus hydrogenoformans (strain ATCC BAA-161 / DSM 6008 / Z-2901).